Reading from the N-terminus, the 366-residue chain is Probable cinnamyl alcohol dehydrogenase 3 (366 aa).

Position 53 (Cys53) interacts with Zn(2+). Position 55 (Ser55) interacts with NADP(+). Residues His75, Glu76, Cys106, Cys109, Cys112, Cys120, and Cys169 each coordinate Zn(2+). NADP(+) is bound by residues Thr173, 194 to 199, 217 to 222, Thr257, Gly281, and 304 to 306; these read GLGGLG, SSSPGK, and SNI.

The protein belongs to the zinc-containing alcohol dehydrogenase family. As to quaternary structure, homodimer. Zn(2+) is required as a cofactor.

It catalyses the reaction (E)-cinnamyl alcohol + NADP(+) = (E)-cinnamaldehyde + NADPH + H(+). The catalysed reaction is (E)-coniferol + NADP(+) = (E)-coniferaldehyde + NADPH + H(+). It carries out the reaction (E)-sinapyl alcohol + NADP(+) = (E)-sinapaldehyde + NADPH + H(+). The enzyme catalyses (E)-4-coumaroyl alcohol + NADP(+) = (E)-4-coumaraldehyde + NADPH + H(+). It catalyses the reaction (E)-caffeyl alcohol + NADP(+) = (E)-caffeyl aldehyde + NADPH + H(+). Its pathway is aromatic compound metabolism; phenylpropanoid biosynthesis. In terms of biological role, involved in lignin biosynthesis. Catalyzes the final step specific for the production of lignin monomers. Catalyzes the NADPH-dependent reduction of coniferaldehyde, 5-hydroxyconiferaldehyde, sinapaldehyde, 4-coumaraldehyde and caffeyl aldehyde to their respective alcohols. The sequence is that of Probable cinnamyl alcohol dehydrogenase 3 from Oryza sativa subsp. japonica (Rice).